Here is a 1040-residue protein sequence, read N- to C-terminus: Eukaryotic translation initiation factor 3 subunit A (1040 aa).

Residues 92 to 121 (LKKFIELAEKKVTEAQTKADEIQSSLESAA) adopt a coiled-coil conformation. A PCI domain is found at 339 to 523 (MTKAASFVLL…GVLTFDSDVF (185 aa)). Residues 608-906 (RVIIEKKKEA…AEARRAARKA (299 aa)) adopt a coiled-coil conformation. 2 stretches are compositionally biased toward basic and acidic residues: residues 617 to 632 (AATD…EETR) and 795 to 901 (EVSE…EARR). Disordered regions lie at residues 617–641 (AATD…QQLQ) and 795–1040 (EVSE…QQNQ). Low complexity-rich tracts occupy residues 908 to 917 (LEPAAPAARP), 945 to 955 (KEAAGGAAPEA), 978 to 993 (SGSS…NGAP), and 1004 to 1018 (SSSS…TPGS).

Belongs to the eIF-3 subunit A family. As to quaternary structure, component of the eukaryotic translation initiation factor 3 (eIF-3) complex.

It is found in the cytoplasm. In terms of biological role, RNA-binding component of the eukaryotic translation initiation factor 3 (eIF-3) complex, which is involved in protein synthesis of a specialized repertoire of mRNAs and, together with other initiation factors, stimulates binding of mRNA and methionyl-tRNAi to the 40S ribosome. The eIF-3 complex specifically targets and initiates translation of a subset of mRNAs involved in cell proliferation. This Aspergillus terreus (strain NIH 2624 / FGSC A1156) protein is Eukaryotic translation initiation factor 3 subunit A (tif32).